The following is a 465-amino-acid chain: Asparagine--tRNA ligase (465 aa).

The protein belongs to the class-II aminoacyl-tRNA synthetase family. Homodimer.

Its subcellular location is the cytoplasm. The catalysed reaction is tRNA(Asn) + L-asparagine + ATP = L-asparaginyl-tRNA(Asn) + AMP + diphosphate + H(+). This chain is Asparagine--tRNA ligase, found in Pseudoalteromonas atlantica (strain T6c / ATCC BAA-1087).